A 133-amino-acid polypeptide reads, in one-letter code: Probable non-specific lipid-transfer protein 2 (133 aa).

A signal peptide spans 1-31 (MRTVSMAALVVIAAALAWTSSAELASAPAPG). 4 cysteine pairs are disulfide-bonded: C35/C83, C45/C60, C61/C106, and C81/C121.

The protein belongs to the plant LTP family.

Plant non-specific lipid-transfer proteins transfer phospholipids as well as galactolipids across membranes. May play a role in wax or cutin deposition in the cell walls of expanding epidermal cells and certain secretory tissues. In Parietaria judaica (Pellitory-of-the-wall), this protein is Probable non-specific lipid-transfer protein 2.